A 267-amino-acid chain; its full sequence is Thiamine thiazole synthase (267 aa).

NAD(+) contacts are provided by residues Ser47, 66–67 (ER), Gly74, Val138, and 164–166 (HID). Asp166 and His181 together coordinate Fe cation. 2 residues coordinate NAD(+): Ser184 and Met230. Arg240 is a glycine binding site.

This sequence belongs to the THI4 family. In terms of assembly, homooctamer; tetramer of dimers. Requires Fe(2+) as cofactor.

It catalyses the reaction hydrogen sulfide + glycine + NAD(+) = ADP-5-ethyl-4-methylthiazole-2-carboxylate + nicotinamide + 3 H2O + H(+). It participates in cofactor biosynthesis; thiamine diphosphate biosynthesis. Functionally, involved in the biosynthesis of the thiazole moiety of thiamine. Catalyzes the conversion of NAD and glycine to adenosine diphosphate 5-(2-hydroxyethyl)-4-methylthiazole-2-carboxylate (ADT), an adenylated thiazole intermediate, using free sulfide as a source of sulfur. This chain is Thiamine thiazole synthase, found in Methanocaldococcus jannaschii (strain ATCC 43067 / DSM 2661 / JAL-1 / JCM 10045 / NBRC 100440) (Methanococcus jannaschii).